An 817-amino-acid chain; its full sequence is Ribonuclease R 1 (817 aa).

Positions 259–584 (RVDYRNEITF…DLLVHRLIRE (326 aa)) constitute an RNB domain. The S1 motif domain occupies 637-717 (GEEYEGIIAS…MTGEIDFEYL (81 aa)). The segment at 728 to 817 (AKAKKKPDHK…DGRKKPHKRG (90 aa)) is disordered. A compositionally biased stretch (basic residues) spans 729 to 742 (KAKKKPDHKGRKKS). Composition is skewed to basic and acidic residues over residues 767-777 (RRADEKFEFDK) and 795-810 (KFTDKKDNGKKFTDGR).

The protein belongs to the RNR ribonuclease family. RNase R subfamily.

The protein resides in the cytoplasm. The enzyme catalyses Exonucleolytic cleavage in the 3'- to 5'-direction to yield nucleoside 5'-phosphates.. Functionally, 3'-5' exoribonuclease that releases 5'-nucleoside monophosphates and is involved in maturation of structured RNAs. The sequence is that of Ribonuclease R 1 (rnr1) from Lactococcus lactis subsp. lactis (strain IL1403) (Streptococcus lactis).